The following is a 471-amino-acid chain: MASKTFDAGVQDYQLTYWTPDYTPLDTDLLACFKVVPQDGVPREEAAAAVAAESSTGTWTTVWTDLLTDMEFYKGRCYRIEDVPGDKNAFYAFIAYPLDLFEEGSVVNVLTSLVGNVFGFKAVRSLRLEDLRFPIAFIKTCGGPPAGIQVERDKLNKYGRPMLGCTIKPKLGLSAKNYGRAVYECLRGGLDLTKDDENINSQPFQRWQNRFEFVADAVDKATAETGERKGHYLNVTAGTVEEMMKRAEFAKELGQPIIMHDFLTAGFTANTTLANWCRDNGMLLHIHRAMHAVIDRNPNHGIHFRVLAKCLRLSGGDHLHTGTVVGKLEGDRASTLGFVDQLREAFVPEDRSRGVFFDQDWGSMPGVMAVASGGIHVWHMPALVNIFGDDSVLQFGGGTQGHPGGNAAGAAANRVALEACVKARNEGRDLEREGGDILRDAARNSKELAVALDTWKEIKFEFDTVDKLDVG.

Asparagine 116 and threonine 166 together coordinate substrate. The Proton acceptor role is filled by lysine 168. Lysine 170 provides a ligand contact to substrate. Residues lysine 194, aspartate 196, and glutamate 197 each coordinate Mg(2+). At lysine 194 the chain carries N6-carboxylysine. The active-site Proton acceptor is the histidine 287. The substrate site is built by arginine 288, histidine 320, and serine 372.

The protein belongs to the RuBisCO large chain family. Type I subfamily. Heterohexadecamer of 8 large chains and 8 small chains. Forms a CsoS2-CsoS1-RuBisCO complex. Mg(2+) is required as a cofactor.

Its subcellular location is the carboxysome. It catalyses the reaction 2 (2R)-3-phosphoglycerate + 2 H(+) = D-ribulose 1,5-bisphosphate + CO2 + H2O. The enzyme catalyses D-ribulose 1,5-bisphosphate + O2 = 2-phosphoglycolate + (2R)-3-phosphoglycerate + 2 H(+). RuBisCO catalyzes two reactions: the carboxylation of D-ribulose 1,5-bisphosphate, the primary event in carbon dioxide fixation, as well as the oxidative fragmentation of the pentose substrate. Both reactions occur simultaneously and in competition at the same active site. Replacing the endogenous type I ccbLS genes in H.neapolitanus with this carboxysomally targeted enzyme reconstitutes RuBisCO with about 25% of normal activity; the active enzyme is targeted to carboxysomes. The protein is Ribulose bisphosphate carboxylase large chain 2 of Hydrogenovibrio crunogenus (strain DSM 25203 / XCL-2) (Thiomicrospira crunogena).